A 74-amino-acid polypeptide reads, in one-letter code: uncharacterized protein (74 aa).

This is an uncharacterized protein from Treponema pallidum (strain Nichols).